The chain runs to 227 residues: uncharacterized protein (227 aa).

The 114-residue stretch at 2-115 (KILMIEDNVS…TLVARIKAVI (114 aa)) folds into the Response regulatory domain. Asp-51 is subject to 4-aspartylphosphate. Residues 128 to 226 (EDMIETECFT…VWGVGYKFDE (99 aa)) constitute a DNA-binding region (ompR/PhoB-type).

Post-translationally, phosphorylated by YclK.

It localises to the cytoplasm. In terms of biological role, could be member of the two-component regulatory system YclK/YclJ. This is an uncharacterized protein from Bacillus subtilis (strain 168).